We begin with the raw amino-acid sequence, 621 residues long: DnaJ homolog subfamily C member 2 (621 aa).

An N-acetylmethionine modification is found at Met1. A phosphoserine mark is found at Ser47, Ser49, Ser60, and Ser63. One can recognise a J domain in the interval Asp88 to Asp161. A ZRF1-UBD region spans residues Val160–Gln250. At Ser183 the chain carries Phosphoserine. Disordered stretches follow at residues Gly287–Gln312 and Lys426–Asn453. SANT domains are found at residues Ser449–Pro511 and Ile549–Lys604.

As to quaternary structure, component of ribosome-associated complex (RAC), a heterodimer composed of Hsp70/DnaK-type chaperone HSPA14 and Hsp40/DnaJ-type chaperone DNAJC2. Interacts (via ZRF1-UBD region) with ID1. Phosphorylated in M (mitotic) phase.

Its subcellular location is the nucleus. The protein resides in the cytoplasm. It is found in the cytosol. Functionally, acts both as a chaperone in the cytosol and as a chromatin regulator in the nucleus. When cytosolic, acts as a molecular chaperone: component of the ribosome-associated complex (RAC), a complex involved in folding or maintaining nascent polypeptides in a folding-competent state. In the RAC complex, stimulates the ATPase activity of the ribosome-associated pool of Hsp70-type chaperones HSPA14 that bind to the nascent polypeptide chain. When nuclear, mediates the switching from polycomb-repressed genes to an active state: specifically recruited at histone H2A ubiquitinated at 'Lys-119' (H2AK119ub), and promotes the displacement of the polycomb PRC1 complex from chromatin, thereby facilitating transcription activation. The protein is DnaJ homolog subfamily C member 2 (Dnajc2) of Rattus norvegicus (Rat).